The primary structure comprises 230 residues: Putative transcription factor bHLH107 (230 aa).

Residues 44 to 93 enclose the bHLH domain; it reads ASLRNHKEAERKRRARINSHLNKLRKLLSCNSKTDKSTLLAKVVQRVKEL.

In terms of assembly, homodimer.

The protein resides in the nucleus. This chain is Putative transcription factor bHLH107 (BHLH107), found in Arabidopsis thaliana (Mouse-ear cress).